Reading from the N-terminus, the 311-residue chain is Protein lifeguard 3 (311 aa).

2 disordered regions span residues 1-37 (MSNP…GGYP) and 50-72 (PAGY…PGHG). The segment covering 53 to 62 (YPQPMPPTHP) has biased composition (pro residues). A phosphoserine mark is found at Ser81 and Ser83. Transmembrane regions (helical) follow at residues 110–130 (LLIT…SAFV), 134–154 (VAVY…LACC), 165–185 (IILL…ISSM), 190–210 (AVII…IFCF), 221–241 (GLFC…SIVL), 246–266 (VYWL…LFLA), and 286–306 (ITGA…VLQL).

The protein belongs to the BI1 family. LFG subfamily.

The protein localises to the membrane. Its subcellular location is the lysosome membrane. It is found in the endosome membrane. Its function is as follows. Negatively regulates aortic matrix metalloproteinase-9 (MMP9) production and may play a protective role in vascular remodeling. The protein is Protein lifeguard 3 (TMBIM1) of Homo sapiens (Human).